A 690-amino-acid polypeptide reads, in one-letter code: DNA ligase (690 aa).

NAD(+) contacts are provided by residues 49–53 (DAEYD), 98–99 (SL), and Glu129. Lys131 serves as the catalytic N6-AMP-lysine intermediate. Residues Arg152, Glu191, Lys308, and Lys332 each contribute to the NAD(+) site. Zn(2+) is bound by residues Cys426, Cys429, Cys444, and Cys450. Positions 607–690 (EDAARLEGLT…ALLREQGIDA (84 aa)) constitute a BRCT domain.

This sequence belongs to the NAD-dependent DNA ligase family. LigA subfamily. Mg(2+) serves as cofactor. Requires Mn(2+) as cofactor.

It carries out the reaction NAD(+) + (deoxyribonucleotide)n-3'-hydroxyl + 5'-phospho-(deoxyribonucleotide)m = (deoxyribonucleotide)n+m + AMP + beta-nicotinamide D-nucleotide.. In terms of biological role, DNA ligase that catalyzes the formation of phosphodiester linkages between 5'-phosphoryl and 3'-hydroxyl groups in double-stranded DNA using NAD as a coenzyme and as the energy source for the reaction. It is essential for DNA replication and repair of damaged DNA. This is DNA ligase from Salinibacter ruber (strain DSM 13855 / M31).